Here is a 127-residue protein sequence, read N- to C-terminus: uncharacterized protein (127 aa).

Residues 1–24 (PLKTKPIDNNLPHRTGYNQASKQQ) form a disordered region.

This is an uncharacterized protein from Homo sapiens (Human).